We begin with the raw amino-acid sequence, 214 residues long: Ribosomal RNA small subunit methyltransferase G (214 aa).

S-adenosyl-L-methionine contacts are provided by residues glycine 73, leucine 78, 124–125 (VE), and arginine 139.

The protein belongs to the methyltransferase superfamily. RNA methyltransferase RsmG family.

It is found in the cytoplasm. The enzyme catalyses guanosine(527) in 16S rRNA + S-adenosyl-L-methionine = N(7)-methylguanosine(527) in 16S rRNA + S-adenosyl-L-homocysteine. Functionally, specifically methylates the N7 position of guanine in position 527 of 16S rRNA. This is Ribosomal RNA small subunit methyltransferase G from Aeromonas hydrophila subsp. hydrophila (strain ATCC 7966 / DSM 30187 / BCRC 13018 / CCUG 14551 / JCM 1027 / KCTC 2358 / NCIMB 9240 / NCTC 8049).